The following is a 263-amino-acid chain: Protein STK_14130 (263 aa).

The protein belongs to the CinA family.

This is Protein STK_14130 from Sulfurisphaera tokodaii (strain DSM 16993 / JCM 10545 / NBRC 100140 / 7) (Sulfolobus tokodaii).